The following is a 279-amino-acid chain: MADS-box transcription factor PHERES 1 (279 aa).

Positions 1–60 (MRGKMKLSFIENDSVRKTTFTKRKKGMLKKFNELVTLCGVDACAVIRSPYNSIQEPWPSR) constitute an MADS-box domain.

As to quaternary structure, interacts with AGL61/DIANA and AGL62. As to expression, male gametophyte, embryo and endosperm.

It localises to the nucleus. Its function is as follows. Probable transcription factor involved in the development of gametophytes and seeds. This chain is MADS-box transcription factor PHERES 1 (PHE1), found in Arabidopsis thaliana (Mouse-ear cress).